We begin with the raw amino-acid sequence, 411 residues long: Serine hydroxymethyltransferase (411 aa).

(6S)-5,6,7,8-tetrahydrofolate-binding positions include Leu-117 and 121–123 (GHL). An N6-(pyridoxal phosphate)lysine modification is found at Lys-226. (6S)-5,6,7,8-tetrahydrofolate-binding positions include Glu-241 and 349 to 351 (SPF).

It belongs to the SHMT family. As to quaternary structure, homodimer. Pyridoxal 5'-phosphate serves as cofactor.

It localises to the cytoplasm. It carries out the reaction (6R)-5,10-methylene-5,6,7,8-tetrahydrofolate + glycine + H2O = (6S)-5,6,7,8-tetrahydrofolate + L-serine. It functions in the pathway one-carbon metabolism; tetrahydrofolate interconversion. Its pathway is amino-acid biosynthesis; glycine biosynthesis; glycine from L-serine: step 1/1. Catalyzes the reversible interconversion of serine and glycine with tetrahydrofolate (THF) serving as the one-carbon carrier. This reaction serves as the major source of one-carbon groups required for the biosynthesis of purines, thymidylate, methionine, and other important biomolecules. Also exhibits THF-independent aldolase activity toward beta-hydroxyamino acids, producing glycine and aldehydes, via a retro-aldol mechanism. This Macrococcus caseolyticus (strain JCSC5402) (Macrococcoides caseolyticum) protein is Serine hydroxymethyltransferase.